The following is a 186-amino-acid chain: Pyridoxal 5'-phosphate synthase subunit PdxT (186 aa).

46–48 (GES) contributes to the L-glutamine binding site. Residue C75 is the Nucleophile of the active site. L-glutamine is bound by residues R101 and 127 to 128 (IR). Active-site charge relay system residues include H164 and E166.

The protein belongs to the glutaminase PdxT/SNO family. As to quaternary structure, in the presence of PdxS, forms a dodecamer of heterodimers. Only shows activity in the heterodimer.

The catalysed reaction is aldehydo-D-ribose 5-phosphate + D-glyceraldehyde 3-phosphate + L-glutamine = pyridoxal 5'-phosphate + L-glutamate + phosphate + 3 H2O + H(+). It carries out the reaction L-glutamine + H2O = L-glutamate + NH4(+). The protein operates within cofactor biosynthesis; pyridoxal 5'-phosphate biosynthesis. Its function is as follows. Catalyzes the hydrolysis of glutamine to glutamate and ammonia as part of the biosynthesis of pyridoxal 5'-phosphate. The resulting ammonia molecule is channeled to the active site of PdxS. The chain is Pyridoxal 5'-phosphate synthase subunit PdxT from Methanococcus aeolicus (strain ATCC BAA-1280 / DSM 17508 / OCM 812 / Nankai-3).